The following is a 421-amino-acid chain: Enolase (421 aa).

Glutamine 165 is a binding site for (2R)-2-phosphoglycerate. The active-site Proton donor is the glutamate 207. Aspartate 244, glutamate 285, and aspartate 312 together coordinate Mg(2+). The (2R)-2-phosphoglycerate site is built by lysine 337, arginine 366, serine 367, and lysine 388. Catalysis depends on lysine 337, which acts as the Proton acceptor.

This sequence belongs to the enolase family. Mg(2+) is required as a cofactor.

The protein localises to the cytoplasm. The protein resides in the secreted. It localises to the cell surface. The catalysed reaction is (2R)-2-phosphoglycerate = phosphoenolpyruvate + H2O. The protein operates within carbohydrate degradation; glycolysis; pyruvate from D-glyceraldehyde 3-phosphate: step 4/5. Its function is as follows. Catalyzes the reversible conversion of 2-phosphoglycerate (2-PG) into phosphoenolpyruvate (PEP). It is essential for the degradation of carbohydrates via glycolysis. This chain is Enolase, found in Ehrlichia ruminantium (strain Welgevonden).